Reading from the N-terminus, the 211-residue chain is Homeobox protein Rhox5 (211 aa).

Positions 38–129 (FFQAGEGRDE…PLRRPGSTQR (92 aa)) are disordered. Gly residues-rich tracts occupy residues 52–62 (GQPGEGAVGTE) and 70–84 (GGEG…GPVG). The segment covering 102 to 119 (HEPVAEGTESVKSEDKQM) has biased composition (basic and acidic residues). Residues 119-176 (MPLRRPGSTQRRLAELERILLSSGSSSGGRSLIDGWISVCPECRNWFKIRRAAYRRNR) constitute a DNA-binding region (homeobox; atypical).

As to expression, highly expressed in placenta. Lower levels in testis, epididymis, ovary and skeletal muscle.

It localises to the nucleus. Functionally, transcription factor required for differentiation of embryonic stem cells (ESCs) into primordial germ cells. In Rattus norvegicus (Rat), this protein is Homeobox protein Rhox5 (Rhox5).